The sequence spans 432 residues: Adenylosuccinate synthetase (432 aa).

GTP contacts are provided by residues Gly-12–Lys-18 and Gly-40–Thr-42. Asp-13 acts as the Proton acceptor in catalysis. Asp-13 and Gly-40 together coordinate Mg(2+). Residues Asp-13–Lys-16, Asn-38–His-41, Thr-132, Arg-146, Gln-226, Thr-241, and Arg-305 each bind IMP. Catalysis depends on His-41, which acts as the Proton donor. Residue Thr-301–Arg-307 coordinates substrate. Residues Arg-307, Lys-333–Asp-335, and Ser-415–Ser-417 contribute to the GTP site.

The protein belongs to the adenylosuccinate synthetase family. In terms of assembly, homodimer. It depends on Mg(2+) as a cofactor.

It is found in the cytoplasm. The enzyme catalyses IMP + L-aspartate + GTP = N(6)-(1,2-dicarboxyethyl)-AMP + GDP + phosphate + 2 H(+). Its pathway is purine metabolism; AMP biosynthesis via de novo pathway; AMP from IMP: step 1/2. In terms of biological role, plays an important role in the de novo pathway of purine nucleotide biosynthesis. Catalyzes the first committed step in the biosynthesis of AMP from IMP. In Chelativorans sp. (strain BNC1), this protein is Adenylosuccinate synthetase.